A 205-amino-acid polypeptide reads, in one-letter code: NADH-quinone oxidoreductase subunit I (205 aa).

4Fe-4S ferredoxin-type domains lie at 75-104 and 114-143; these read RLLESGNERCIGCGLCEKICISNCIRMETS and HEYTINFGRCIFCGFCAEVCPELAIVHGGR. 8 residues coordinate [4Fe-4S] cluster: Cys84, Cys87, Cys90, Cys94, Cys123, Cys126, Cys129, and Cys133.

It belongs to the complex I 23 kDa subunit family. NDH-1 is composed of 14 different subunits. Subunits NuoA, H, J, K, L, M, N constitute the membrane sector of the complex. Requires [4Fe-4S] cluster as cofactor.

Its subcellular location is the cell inner membrane. The enzyme catalyses a quinone + NADH + 5 H(+)(in) = a quinol + NAD(+) + 4 H(+)(out). Its function is as follows. NDH-1 shuttles electrons from NADH, via FMN and iron-sulfur (Fe-S) centers, to quinones in the respiratory chain. The immediate electron acceptor for the enzyme in this species is believed to be ubiquinone. Couples the redox reaction to proton translocation (for every two electrons transferred, four hydrogen ions are translocated across the cytoplasmic membrane), and thus conserves the redox energy in a proton gradient. The protein is NADH-quinone oxidoreductase subunit I of Wolinella succinogenes (strain ATCC 29543 / DSM 1740 / CCUG 13145 / JCM 31913 / LMG 7466 / NCTC 11488 / FDC 602W) (Vibrio succinogenes).